A 407-amino-acid chain; its full sequence is Arrestin red cell isoform 1 (407 aa).

It belongs to the arrestin family.

The protein localises to the cytoplasm. The polypeptide is Arrestin red cell isoform 1 (Oncorhynchus mykiss (Rainbow trout)).